We begin with the raw amino-acid sequence, 1394 residues long: DNA-directed RNA polymerase subunit beta'' (1394 aa).

Cys-224, Cys-295, Cys-302, and Cys-305 together coordinate Zn(2+).

It belongs to the RNA polymerase beta' chain family. RpoC2 subfamily. In terms of assembly, in plastids the minimal PEP RNA polymerase catalytic core is composed of four subunits: alpha, beta, beta', and beta''. When a (nuclear-encoded) sigma factor is associated with the core the holoenzyme is formed, which can initiate transcription. The cofactor is Zn(2+).

The protein localises to the plastid. The protein resides in the chloroplast. It carries out the reaction RNA(n) + a ribonucleoside 5'-triphosphate = RNA(n+1) + diphosphate. Functionally, DNA-dependent RNA polymerase catalyzes the transcription of DNA into RNA using the four ribonucleoside triphosphates as substrates. This Cucumis sativus (Cucumber) protein is DNA-directed RNA polymerase subunit beta''.